The primary structure comprises 95 residues: Protein RnfH (95 aa).

The protein belongs to the UPF0125 (RnfH) family.

This chain is Protein RnfH, found in Erwinia tasmaniensis (strain DSM 17950 / CFBP 7177 / CIP 109463 / NCPPB 4357 / Et1/99).